The following is a 230-amino-acid chain: Sugar fermentation stimulation protein homolog (230 aa).

The protein belongs to the SfsA family.

The polypeptide is Sugar fermentation stimulation protein homolog (Clostridium botulinum (strain 657 / Type Ba4)).